A 348-amino-acid chain; its full sequence is MEFIRIDGSYGEGGGSLLRYAIALSSVTMKPVEIYNIRVKRANPGLRPQHLNAVRALARITEATVEGDEVGSTALRFIPRKRAGGSFEIDIGTAGSISLIIQAILPACISSEEEISLRIRGGTDVPLAPPIDYMAEVFLRNMAPLGVRAELKLLRRGHYPRGGGIVELHASPSKLFPIDKVRGEKFDRVLGRCHAVKLPRSVVERISSSAIDTLRKEGLRVEIEEEWSEDGHLGPGAGIVLWTDSNPRIGADELGEKGKPSEVVGKNAASKLLDEIKAGMAFDSHMGDMIIPYLALARGRSRVGISKLTLHAESNIWLVERFLPVKFIVQGGVGSPTVIEVEGAGLEL.

Residues Gln102 and 285-288 (HMGD) each bind ATP. Residue His311 is the Tele-AMP-histidine intermediate of the active site.

It belongs to the RNA 3'-terminal cyclase family. Type 1 subfamily.

Its subcellular location is the cytoplasm. It catalyses the reaction a 3'-end 3'-phospho-ribonucleotide-RNA + ATP = a 3'-end 2',3'-cyclophospho-ribonucleotide-RNA + AMP + diphosphate. Catalyzes the conversion of 3'-phosphate to a 2',3'-cyclic phosphodiester at the end of RNA. The mechanism of action of the enzyme occurs in 3 steps: (A) adenylation of the enzyme by ATP; (B) transfer of adenylate to an RNA-N3'P to produce RNA-N3'PP5'A; (C) and attack of the adjacent 2'-hydroxyl on the 3'-phosphorus in the diester linkage to produce the cyclic end product. The biological role of this enzyme is unknown but it is likely to function in some aspects of cellular RNA processing. This is RNA 3'-terminal phosphate cyclase from Korarchaeum cryptofilum (strain OPF8).